Here is a 330-residue protein sequence, read N- to C-terminus: RNA polymerase sigma factor RpoS (330 aa).

The interval 56–89 is sigma-70 factor domain-1; the sequence is DATQLYLGEIGYSPLLTAEEEVYFARRALRGDVA. The interval 94 to 164 is sigma-70 factor domain-2; the sequence is MIESNLRLVV…ERAIMNQTRT (71 aa). An Interaction with polymerase core subunit RpoC motif is present at residues 118 to 121; it reads DLIE. A sigma-70 factor domain-3 region spans residues 174–249; sequence ELNVYLRTAR…DEKENGPEDT (76 aa). The interval 262-315 is sigma-70 factor domain-4; it reads WLFELNAKQREVLARRFGLLGYEAATLEDVGREIGLTRERVRQIQVEGLRRLRE. A DNA-binding region (H-T-H motif) is located at residues 288-307; that stretch reads LEDVGREIGLTRERVRQIQV.

Belongs to the sigma-70 factor family. RpoS subfamily. Interacts with the RNA polymerase core enzyme and RssB.

The protein resides in the cytoplasm. Its function is as follows. Sigma factors are initiation factors that promote the attachment of RNA polymerase to specific initiation sites and are then released. This sigma factor is the master transcriptional regulator of the stationary phase and the general stress response. Controls, positively or negatively, the expression of several hundred genes, which are mainly involved in metabolism, transport, regulation and stress management. Protects stationary phase cells from killing induced by endoribonuclease MazF. This Escherichia coli (strain K12) protein is RNA polymerase sigma factor RpoS.